We begin with the raw amino-acid sequence, 31 residues long: Delta-conotoxin-like ErVIA (31 aa).

Residues 1-4 constitute a propeptide that is removed on maturation; the sequence is LNKR. 3 disulfides stabilise this stretch: cysteine 5/cysteine 21, cysteine 12/cysteine 25, and cysteine 20/cysteine 29.

The protein belongs to the conotoxin O1 superfamily. In terms of tissue distribution, expressed by the venom duct.

The protein localises to the secreted. In terms of biological role, this toxin activates voltage-gated sodium channels. It shifts the voltage-dependence of activation to more hyperpolarized potentials but has only little effect on channel inactivation. It is active on Nav1.3/SCN3A (EC(50)=3.98 nM), Nav1.4/SCN4A (EC(50)=4.99 nM), Nav1.6/SCN8A (EC(50)=1.27 nM) and Nav1.7/SCN9A (EC(50)=2.42 nM) voltage-gated sodium channels. In vivo, it induces nocifensive or pain-like behaviors in mice when injected intraplantarly. This chain is Delta-conotoxin-like ErVIA, found in Conus eburneus (Ivory cone).